The following is a 389-amino-acid chain: F-box protein At3g19880 (389 aa).

The F-box domain occupies 2 to 49 (TMMSDLTQDLVEEILSRVPITSLGAVRSTCKGWNALSKERILCIGEPK).

The protein is F-box protein At3g19880 of Arabidopsis thaliana (Mouse-ear cress).